Reading from the N-terminus, the 289-residue chain is Acetyl-coenzyme A carboxylase carboxyl transferase subunit beta (289 aa).

One can recognise a CoA carboxyltransferase N-terminal domain in the interval 23-289; that stretch reads HWIKCPSCSA…YDENPCLLHL (267 aa). Cysteine 27, cysteine 30, cysteine 46, and cysteine 49 together coordinate Zn(2+). Residues 27-49 form a C4-type zinc finger; the sequence is CPSCSALMYYKEVIAQHHVCPKC.

It belongs to the AccD/PCCB family. Acetyl-CoA carboxylase is a heterohexamer composed of biotin carboxyl carrier protein (AccB), biotin carboxylase (AccC) and two subunits each of ACCase subunit alpha (AccA) and ACCase subunit beta (AccD). Requires Zn(2+) as cofactor.

Its subcellular location is the cytoplasm. It carries out the reaction N(6)-carboxybiotinyl-L-lysyl-[protein] + acetyl-CoA = N(6)-biotinyl-L-lysyl-[protein] + malonyl-CoA. It functions in the pathway lipid metabolism; malonyl-CoA biosynthesis; malonyl-CoA from acetyl-CoA: step 1/1. In terms of biological role, component of the acetyl coenzyme A carboxylase (ACC) complex. Biotin carboxylase (BC) catalyzes the carboxylation of biotin on its carrier protein (BCCP) and then the CO(2) group is transferred by the transcarboxylase to acetyl-CoA to form malonyl-CoA. The sequence is that of Acetyl-coenzyme A carboxylase carboxyl transferase subunit beta from Wolinella succinogenes (strain ATCC 29543 / DSM 1740 / CCUG 13145 / JCM 31913 / LMG 7466 / NCTC 11488 / FDC 602W) (Vibrio succinogenes).